Consider the following 1177-residue polypeptide: uncharacterized protein (1177 aa).

Residues 1 to 26 (MKKLLKKSKFWWFLLCGLSVSTILVA) form the signal peptide. Cys27 carries N-palmitoyl cysteine lipidation. Residue Cys27 is the site of S-diacylglycerol cysteine attachment.

Belongs to the MG307/MG309/MG338 family.

Its subcellular location is the cell membrane. This is an uncharacterized protein from Mycoplasma genitalium (strain ATCC 33530 / DSM 19775 / NCTC 10195 / G37) (Mycoplasmoides genitalium).